We begin with the raw amino-acid sequence, 314 residues long: Pyridoxal 5'-phosphate synthase-like subunit PDX1.2 (314 aa).

Residue Ala-2 is modified to N-acetylalanine.

It belongs to the PdxS/SNZ family. In terms of assembly, homodimer or heterodimer with PDX1.1 or PDX1.3. No interaction with PDX2. In terms of tissue distribution, expressed in callus tissues, flowers and roots. Weakly expressed in leaves and stems.

It is found in the cytoplasm. The protein has no function in the formation of pyridoxal 5'-phosphate. This is Pyridoxal 5'-phosphate synthase-like subunit PDX1.2 (PDX12) from Arabidopsis thaliana (Mouse-ear cress).